The sequence spans 126 residues: Profilin (126 aa).

This sequence belongs to the profilin family. In terms of assembly, occurs in many kinds of cells as a complex with monomeric actin in a 1:1 ratio.

The protein localises to the cytoplasm. It localises to the cytoskeleton. In terms of biological role, binds to actin and affects the structure of the cytoskeleton. At high concentrations, profilin prevents the polymerization of actin, whereas it enhances it at low concentrations. By binding to PIP2, it inhibits the formation of IP3 and DG. In Branchiostoma belcheri (Amphioxus), this protein is Profilin.